The primary structure comprises 32 residues: Photosystem II reaction center protein T (32 aa).

The helical transmembrane segment at 3 to 23 threads the bilayer; that stretch reads ALVYVFLLIGTLMIIFFAIFF.

The protein belongs to the PsbT family. In terms of assembly, PSII is composed of 1 copy each of membrane proteins PsbA, PsbB, PsbC, PsbD, PsbE, PsbF, PsbH, PsbI, PsbJ, PsbK, PsbL, PsbM, PsbT, PsbY, PsbZ, Psb30/Ycf12, at least 3 peripheral proteins of the oxygen-evolving complex and a large number of cofactors. It forms dimeric complexes.

The protein localises to the plastid. It localises to the chloroplast thylakoid membrane. Its function is as follows. Found at the monomer-monomer interface of the photosystem II (PS II) dimer, plays a role in assembly and dimerization of PSII. PSII is a light-driven water plastoquinone oxidoreductase, using light energy to abstract electrons from H(2)O, generating a proton gradient subsequently used for ATP formation. The sequence is that of Photosystem II reaction center protein T from Cyanidioschyzon merolae (strain NIES-3377 / 10D) (Unicellular red alga).